The primary structure comprises 334 residues: Holliday junction branch migration complex subunit RuvB (334 aa).

A large ATPase domain (RuvB-L) region spans residues 4-184; the sequence is ADRLVSAGVI…FGIVQRLEFY (181 aa). Residues Ile23, Arg24, Gly65, Lys68, Thr69, Thr70, 131–133, Arg174, Tyr184, and Arg221 each bind ATP; that span reads EDY. Position 69 (Thr69) interacts with Mg(2+). Residues 185 to 255 are small ATPAse domain (RuvB-S); that stretch reads RVEDLQHIVG…VASRALDMLS (71 aa). The interval 258-334 is head domain (RuvB-H); that stretch reads SEGFDYMDRK…YKHFGITREG (77 aa). Residues Arg294, Arg313, and Arg318 each contribute to the DNA site.

It belongs to the RuvB family. As to quaternary structure, homohexamer. Forms an RuvA(8)-RuvB(12)-Holliday junction (HJ) complex. HJ DNA is sandwiched between 2 RuvA tetramers; dsDNA enters through RuvA and exits via RuvB. An RuvB hexamer assembles on each DNA strand where it exits the tetramer. Each RuvB hexamer is contacted by two RuvA subunits (via domain III) on 2 adjacent RuvB subunits; this complex drives branch migration. In the full resolvosome a probable DNA-RuvA(4)-RuvB(12)-RuvC(2) complex forms which resolves the HJ.

It is found in the cytoplasm. It carries out the reaction ATP + H2O = ADP + phosphate + H(+). Functionally, the RuvA-RuvB-RuvC complex processes Holliday junction (HJ) DNA during genetic recombination and DNA repair, while the RuvA-RuvB complex plays an important role in the rescue of blocked DNA replication forks via replication fork reversal (RFR). RuvA specifically binds to HJ cruciform DNA, conferring on it an open structure. The RuvB hexamer acts as an ATP-dependent pump, pulling dsDNA into and through the RuvAB complex. RuvB forms 2 homohexamers on either side of HJ DNA bound by 1 or 2 RuvA tetramers; 4 subunits per hexamer contact DNA at a time. Coordinated motions by a converter formed by DNA-disengaged RuvB subunits stimulates ATP hydrolysis and nucleotide exchange. Immobilization of the converter enables RuvB to convert the ATP-contained energy into a lever motion, pulling 2 nucleotides of DNA out of the RuvA tetramer per ATP hydrolyzed, thus driving DNA branch migration. The RuvB motors rotate together with the DNA substrate, which together with the progressing nucleotide cycle form the mechanistic basis for DNA recombination by continuous HJ branch migration. Branch migration allows RuvC to scan DNA until it finds its consensus sequence, where it cleaves and resolves cruciform DNA. The polypeptide is Holliday junction branch migration complex subunit RuvB (Erwinia tasmaniensis (strain DSM 17950 / CFBP 7177 / CIP 109463 / NCPPB 4357 / Et1/99)).